We begin with the raw amino-acid sequence, 474 residues long: Ribulose bisphosphate carboxylase large chain (474 aa).

Residues Asn117 and Thr167 each contribute to the substrate site. Lys169 (proton acceptor) is an active-site residue. Lys171 serves as a coordination point for substrate. 3 residues coordinate Mg(2+): Lys195, Asp197, and Glu198. Lys195 is subject to N6-carboxylysine. His288 serves as the catalytic Proton acceptor. Residues Arg289, His321, and Ser373 each contribute to the substrate site.

It belongs to the RuBisCO large chain family. Type I subfamily. Heterohexadecamer of 8 large chains and 8 small chains. Mg(2+) is required as a cofactor.

It carries out the reaction 2 (2R)-3-phosphoglycerate + 2 H(+) = D-ribulose 1,5-bisphosphate + CO2 + H2O. The enzyme catalyses D-ribulose 1,5-bisphosphate + O2 = 2-phosphoglycolate + (2R)-3-phosphoglycerate + 2 H(+). Functionally, ruBisCO catalyzes two reactions: the carboxylation of D-ribulose 1,5-bisphosphate, the primary event in carbon dioxide fixation, as well as the oxidative fragmentation of the pentose substrate. Both reactions occur simultaneously and in competition at the same active site. The polypeptide is Ribulose bisphosphate carboxylase large chain (Hydrogenophilus thermoluteolus (Pseudomonas hydrogenothermophila)).